Here is a 388-residue protein sequence, read N- to C-terminus: Na(+)/H(+) antiporter NhaA (388 aa).

The Cytoplasmic portion of the chain corresponds to 1–11 (MKHLHRFFSSD). A helical membrane pass occupies residues 12 to 31 (ASGGIILIIAAILAMMMANS). Residues 32 to 58 (GATSGWYHDFLETPVQLRVGSLEINKN) are Periplasmic-facing. The helical transmembrane segment at 59-80 (MLLWINDALMAVFFLLVGLEVK) threads the bilayer. Topologically, residues 81–96 (RELMQGSLASLRQAAF) are cytoplasmic. Residues 97–116 (PVIAAIGGMIVPALLYLAFN) traverse the membrane as a helical segment. The Periplasmic segment spans residues 117 to 122 (YADPIT). Residues 123-130 (REGWAIPA) form a helical membrane-spanning segment. The Cytoplasmic segment spans residues 131–154 (ATDIAFALGVLALLGSRVPLALKI). A helical transmembrane segment spans residues 155–176 (FLMALAIIDDLGAIIIIALFYT). Residues 177-180 (NDLS) lie on the Periplasmic side of the membrane. Residues 181 to 200 (MASLGVAAVAIAVLAVLNLC) traverse the membrane as a helical segment. At 201–204 (GVRR) the chain is on the cytoplasmic side. A helical membrane pass occupies residues 205–222 (TGVYILVGVVLWTAVLKS). Gly223 is a topological domain (periplasmic). Residues 224–236 (VHATLAGVIVGFF) form a helical membrane-spanning segment. Topologically, residues 237–253 (IPLKEKHGRSPAKRLEH) are cytoplasmic. The helical transmembrane segment at 254-272 (VLHPWVAYLILPLFAFANA) threads the bilayer. The Periplasmic segment spans residues 273-286 (GVSLQGVTLDGLTS). The helical transmembrane segment at 287-310 (ILPLGIIAGLLIGKPLGISLFCWL) threads the bilayer. Over 311 to 339 (ALRLKLAHLPEGTTYQQIMAVGILCGIGF) the chain is Cytoplasmic. A helical transmembrane segment spans residues 340 to 350 (TMSIFIASLAF). Topologically, residues 351–357 (GSVDPEL) are periplasmic. A helical transmembrane segment spans residues 358-380 (INWAKLGILVGSISSAVIGYSWL). At 381 to 388 (RVRLRPSV) the chain is on the cytoplasmic side.

It belongs to the NhaA Na(+)/H(+) (TC 2.A.33) antiporter family.

It localises to the cell inner membrane. The enzyme catalyses Na(+)(in) + 2 H(+)(out) = Na(+)(out) + 2 H(+)(in). Its function is as follows. Na(+)/H(+) antiporter that extrudes sodium in exchange for external protons. This chain is Na(+)/H(+) antiporter NhaA, found in Shigella boydii serotype 4 (strain Sb227).